Reading from the N-terminus, the 569-residue chain is Sialic acid-binding Ig-like lectin 5 (569 aa).

The first 16 residues, 1–16, serve as a signal peptide directing secretion; that stretch reads MRWAWLLPLLWAGCLA. Topologically, residues 17-439 are extracellular; it reads TDGYSLSVTG…KSETSRGTVL (423 aa). Residues 18-116 enclose the Ig-like V-type domain; sequence DGYSLSVTGS…DTGTYFFRLD (99 aa). 4 disulfide bridges follow: cysteine 35–cysteine 163, cysteine 40–cysteine 96, cysteine 157–cysteine 206, and cysteine 265–cysteine 308. Residue asparagine 95 is glycosylated (N-linked (GlcNAc...) asparagine). Residues arginine 114, lysine 120, and serine 122 each coordinate N-acetylneuraminate. Ig-like C2-type domains lie at 139-224 and 229-324; these read PNIQ…QQLS and PQKM…VSLS. N-linked (GlcNAc...) asparagine glycans are attached at residues asparagine 151, asparagine 200, and asparagine 203. 3 N-linked (GlcNAc...) asparagine glycosylation sites follow: asparagine 369, asparagine 372, and asparagine 387. Residues 440-460 form a helical membrane-spanning segment; sequence GAIWGAGLMALLAVCLCLIFF. The Cytoplasmic segment spans residues 461–569; that stretch reads TVKVLRKKSA…VYTEIKIHKC (109 aa). The disordered stretch occupies residues 508-556; it reads HLNEPGSQTQKEQPPLATVPDTQKDEPELHYASLSFQGPMPPKPQNTEA. Positions 536 to 541 match the ITIM motif motif; sequence LHYASL. An SLAM-like motif motif is present at residues 559–564; the sequence is SVYTEI.

Belongs to the immunoglobulin superfamily. SIGLEC (sialic acid binding Ig-like lectin) family. Predominantly expressed by immature monocytic/myeloid lineage cells in bone marrow. Also found at lower levels in mature neutrophils and monocytes.

It localises to the membrane. Putative adhesion molecule that mediates sialic-acid dependent binding to cells. Preferentially binds to alpha-2,3-linked sialic acid. The sialic acid recognition site may be masked by cis interactions with sialic acids on the same cell surface. This Mus musculus (Mouse) protein is Sialic acid-binding Ig-like lectin 5 (Siglec5).